The following is a 197-amino-acid chain: UPF0637 protein LEUM_0496 (197 aa).

The protein belongs to the UPF0637 family.

In Leuconostoc mesenteroides subsp. mesenteroides (strain ATCC 8293 / DSM 20343 / BCRC 11652 / CCM 1803 / JCM 6124 / NCDO 523 / NBRC 100496 / NCIMB 8023 / NCTC 12954 / NRRL B-1118 / 37Y), this protein is UPF0637 protein LEUM_0496.